Here is a 215-residue protein sequence, read N- to C-terminus: FMN-dependent NADH:quinone oxidoreductase 1 (215 aa).

The protein belongs to the azoreductase type 1 family. As to quaternary structure, homodimer. FMN serves as cofactor.

It carries out the reaction 2 a quinone + NADH + H(+) = 2 a 1,4-benzosemiquinone + NAD(+). It catalyses the reaction N,N-dimethyl-1,4-phenylenediamine + anthranilate + 2 NAD(+) = 2-(4-dimethylaminophenyl)diazenylbenzoate + 2 NADH + 2 H(+). Quinone reductase that provides resistance to thiol-specific stress caused by electrophilic quinones. Its function is as follows. Also exhibits azoreductase activity. Catalyzes the reductive cleavage of the azo bond in aromatic azo compounds to the corresponding amines. The protein is FMN-dependent NADH:quinone oxidoreductase 1 of Lactiplantibacillus plantarum (strain ATCC BAA-793 / NCIMB 8826 / WCFS1) (Lactobacillus plantarum).